The sequence spans 562 residues: Long-chain-fatty-acid--CoA ligase (562 aa).

It belongs to the ATP-dependent AMP-binding enzyme family. Mg(2+) is required as a cofactor.

Its subcellular location is the membrane. It carries out the reaction a long-chain fatty acid + ATP + CoA = a long-chain fatty acyl-CoA + AMP + diphosphate. It functions in the pathway lipid metabolism; fatty acid beta-oxidation. In terms of biological role, catalyzes the esterification, concomitant with transport, of exogenous long-chain fatty acids into metabolically active CoA thioesters for subsequent degradation or incorporation into phospholipids. The chain is Long-chain-fatty-acid--CoA ligase (fadD) from Haemophilus influenzae (strain ATCC 51907 / DSM 11121 / KW20 / Rd).